We begin with the raw amino-acid sequence, 175 residues long: ADP-ribosylation factor 6 (175 aa).

The N-myristoyl glycine moiety is linked to residue Gly-2. Lys-3 carries the N6-myristoyl lysine lipid modification. GTP contacts are provided by residues 23–28 (AAGKTT), 41–44 (TIPT), 63–67 (DVGGQ), 122–125 (NKQD), and 155–156 (CA).

It belongs to the small GTPase superfamily. Arf family. Interacts (when activated) with GGA1, GGA2 and GGA3; the interaction is required for proper subcellular location of GGA1, GGA2 and GGA3. Interacts with PIP5K1C. Interacts with USP6 (via Rab-GAP TBC domain). Interacts with RAB11FIP3 and RAB11FIP4. Interacts with HERC1. Interacts with ARHGAP21. Interacts with ASAP3; the interaction is stabilized by calcium ions. Interacts with NCS1/FREQ at the plasma membrane. Interacts with TBC1D24. Interacts with ECPAS. Interacts with MICALL1. Interacts with SPAG9 homodimers, forming heterotetramers. Interacts with CYTH3. Interacts with ASAP2. Interacts with UACA. Interacts with KIF23, forming heterodimers and heterotetramers. Interacts with C9orf72. Interacts (GTP-bound form) with TJAP1/PILT. Interacts with PRKAA2. Interacts with CD36 (when palmitoylated); this interaction mediates CD36 transport from the Golgi to the plasma membrane. Interacts with APBB1. As to quaternary structure, (Microbial infection) Interacts with the V.cholerae enterotoxin subunit A1; this causes a conformation change so that the toxin can bind NAD and catalyze the ADP-ribosylation of Gs alpha. In terms of assembly, (Microbial infection) Interacts with EspG from enteropathogenic E.coli. (Microbial infection) Identified in a complex with RAB1A and EspG from enteropathogenic E.coli. As to quaternary structure, (Microbial infection) Interacts with human enterovirus 71 protein VP1. In terms of processing, GTP-bound form is myristoylated on Lys-3 by NMT1 and NMT2, allowing ARF6 to remain on membranes during the GTPase cycle, thereby promoting its activity. GDP-bound inactive form is demyristoylated on Lys-3 by SIRT2 at early endosomes or endocytic recycling compartment to allow its efficient activation by a guanine exchange factor (GEF) after GDP release. As to expression, ubiquitous, with higher levels in heart, substantia nigra, and kidney.

It is found in the cytoplasm. The protein localises to the cytosol. The protein resides in the cell membrane. It localises to the endosome membrane. Its subcellular location is the recycling endosome membrane. It is found in the cell projection. The protein localises to the filopodium membrane. The protein resides in the ruffle. It localises to the cleavage furrow. Its subcellular location is the midbody. It is found in the midbody ring. The protein localises to the early endosome membrane. The protein resides in the golgi apparatus. It localises to the trans-Golgi network membrane. The catalysed reaction is GTP + H2O = GDP + phosphate + H(+). Activation is generally mediated by a guanine exchange factor (GEF), while inactivation through hydrolysis of bound GTP is catalyzed by a GTPase activating protein (GAP). Activated by ASAP3. Inactivated by ACAP1 and ACAP2. Activated by NGF via NTRK1. Activated by PRKAA2 through its C-terminal regulatory domain. GTP-binding protein involved in protein trafficking that regulates endocytic recycling and cytoskeleton remodeling. GTP-bound form plays an important role in the transport of multiple palmitoylated proteins form the Golgi to the plasma membrane. Required for normal completion of mitotic cytokinesis. Plays a role in the reorganization of the actin cytoskeleton and the formation of stress fibers. Involved in the regulation of dendritic spine development, contributing to the regulation of dendritic branching and filopodia extension. Potentiates the neurite outgrowth in primary neurons by interacting with the molecular adapter APBB1. Plays an important role in membrane trafficking, during junctional remodeling and epithelial polarization. Regulates surface levels of adherens junction proteins such as CDH1. Required for NTRK1 sorting to the recycling pathway from early endosomes. Functionally, (Microbial infection) Functions as an allosteric activator of the cholera toxin catalytic subunit, an ADP-ribosyltransferase. Its function is as follows. (Microbial infection) Plays a key role in the endocytosis of enterovirus 71 and thus viral entry into brain microvascular endothelial cells. The polypeptide is ADP-ribosylation factor 6 (Homo sapiens (Human)).